Here is a 445-residue protein sequence, read N- to C-terminus: Phosphoglucosamine mutase (445 aa).

Ser-102 (phosphoserine intermediate) is an active-site residue. 4 residues coordinate Mg(2+): Ser-102, Asp-241, Asp-243, and Asp-245. Phosphoserine is present on Ser-102.

Belongs to the phosphohexose mutase family. Requires Mg(2+) as cofactor. Activated by phosphorylation.

The enzyme catalyses alpha-D-glucosamine 1-phosphate = D-glucosamine 6-phosphate. In terms of biological role, catalyzes the conversion of glucosamine-6-phosphate to glucosamine-1-phosphate. This is Phosphoglucosamine mutase from Shewanella halifaxensis (strain HAW-EB4).